A 986-amino-acid chain; its full sequence is Bifunctional glutamine synthetase adenylyltransferase/adenylyl-removing enzyme (986 aa).

Residues 1–473 are adenylyl removase; it reads MTSSAPGNAD…HYARLFEGDP (473 aa). The interval 478–986 is adenylyl transferase; sequence SLPPVNYGAG…RRVFTALLER (509 aa).

The protein belongs to the GlnE family. Requires Mg(2+) as cofactor.

It catalyses the reaction [glutamine synthetase]-O(4)-(5'-adenylyl)-L-tyrosine + phosphate = [glutamine synthetase]-L-tyrosine + ADP. The enzyme catalyses [glutamine synthetase]-L-tyrosine + ATP = [glutamine synthetase]-O(4)-(5'-adenylyl)-L-tyrosine + diphosphate. Its function is as follows. Involved in the regulation of glutamine synthetase GlnA, a key enzyme in the process to assimilate ammonia. When cellular nitrogen levels are high, the C-terminal adenylyl transferase (AT) inactivates GlnA by covalent transfer of an adenylyl group from ATP to specific tyrosine residue of GlnA, thus reducing its activity. Conversely, when nitrogen levels are low, the N-terminal adenylyl removase (AR) activates GlnA by removing the adenylyl group by phosphorolysis, increasing its activity. The regulatory region of GlnE binds the signal transduction protein PII (GlnB) which indicates the nitrogen status of the cell. This Bradyrhizobium sp. (strain ORS 278) protein is Bifunctional glutamine synthetase adenylyltransferase/adenylyl-removing enzyme.